The primary structure comprises 585 residues: Conglutin alpha 3 (585 aa).

Positions 1-23 (MANPFLLSLSLCLVLLYTSACLG) are cleaved as a signal peptide. Intrachain disulfides connect cysteine 32–cysteine 65 and cysteine 108–cysteine 406. Positions 37 to 258 (LNALEPDNRI…ALNIDEDTVH (222 aa)) constitute a Cupin type-1 1 domain. Disordered regions lie at residues 113 to 147 (EEAQ…HFRE), 199 to 240 (EEYP…ILSG), and 283 to 402 (KWQE…NGLE). Residues 136–147 (EDSHQKIRHFRE) are compositionally biased toward basic and acidic residues. Over residues 211 to 224 (RQQHQRPSGRRHGQ) the composition is skewed to basic residues. The span at 309–320 (REEEEKEEEDEP) shows a compositional bias: acidic residues. Basic and acidic residues predominate over residues 338–350 (ERGRGRGGSEWKR). The Cupin type-1 2 domain maps to 412–558 (ENIADPTRAD…AFRLSLNQVS (147 aa)). Polar residues predominate over residues 565 to 579 (NHNPLVTPQSQSQDH). Residues 565 to 585 (NHNPLVTPQSQSQDHNLVKVA) form a disordered region.

Belongs to the 11S seed storage protein (globulins) family. In terms of assembly, hexamer; each subunit is composed of an acidic and a basic chain derived from a single precursor and linked by a disulfide bond. Component of globulins complexes which accumulate in seeds.

Sulfur-rich seed storage protein. This protein found in the seeds of many leguminous and non-leguminous plants is the source of sulfur-containing amino acids in seed meals. In Lupinus angustifolius (Narrow-leaved blue lupine), this protein is Conglutin alpha 3.